Here is a 127-residue protein sequence, read N- to C-terminus: Large ribosomal subunit protein bL19 (127 aa).

Belongs to the bacterial ribosomal protein bL19 family.

Its function is as follows. This protein is located at the 30S-50S ribosomal subunit interface and may play a role in the structure and function of the aminoacyl-tRNA binding site. This is Large ribosomal subunit protein bL19 from Myxococcus xanthus (strain DK1622).